Reading from the N-terminus, the 185-residue chain is Dihydrofolate reductase (185 aa).

A DHFR domain is found at 5–184; the sequence is KLNLIAAACD…ISYYFRVYKK (180 aa). Residues A11 and 17 to 23 each bind NADP(+); that span reads GIGVNGA. A substrate-binding site is contributed by 31–36; the sequence is EMAYFT. An NADP(+)-binding site is contributed by 55-57; sequence RRT. Residue R71 participates in substrate binding. Residues 77–79 and 117–124 each bind NADP(+); these read THN and GGSSIYRA.

The protein belongs to the dihydrofolate reductase family.

It catalyses the reaction (6S)-5,6,7,8-tetrahydrofolate + NADP(+) = 7,8-dihydrofolate + NADPH + H(+). It functions in the pathway cofactor biosynthesis; tetrahydrofolate biosynthesis; 5,6,7,8-tetrahydrofolate from 7,8-dihydrofolate: step 1/1. Its activity is regulated as follows. Activated by dithiothreitol and p-chloromercuribenzoate. Inhibited by trimethoprim, methotrexate, sodium tetrathionate and hydroxymercuribenzoate. Functionally, key enzyme in folate metabolism. Catalyzes an essential reaction for de novo glycine and purine synthesis, and for DNA precursor synthesis. This Heliothis virescens (Tobacco budworm moth) protein is Dihydrofolate reductase (DHFR).